The sequence spans 357 residues: Aspartate carbamoyltransferase catalytic subunit (357 aa).

A compositionally biased stretch (polar residues) spans 1–17 (MSNSIDSQSIPTISPTD). The interval 1 to 21 (MSNSIDSQSIPTISPTDYTKF) is disordered. Carbamoyl phosphate contacts are provided by Arg-97 and Thr-98. Lys-125 is an L-aspartate binding site. Carbamoyl phosphate is bound by residues Arg-147, His-177, and Gln-180. L-aspartate is bound by residues Arg-211 and Arg-266. Carbamoyl phosphate-binding residues include Gly-307 and Pro-308.

Belongs to the aspartate/ornithine carbamoyltransferase superfamily. ATCase family. As to quaternary structure, heterododecamer (2C3:3R2) of six catalytic PyrB chains organized as two trimers (C3), and six regulatory PyrI chains organized as three dimers (R2).

It carries out the reaction carbamoyl phosphate + L-aspartate = N-carbamoyl-L-aspartate + phosphate + H(+). Its pathway is pyrimidine metabolism; UMP biosynthesis via de novo pathway; (S)-dihydroorotate from bicarbonate: step 2/3. In terms of biological role, catalyzes the condensation of carbamoyl phosphate and aspartate to form carbamoyl aspartate and inorganic phosphate, the committed step in the de novo pyrimidine nucleotide biosynthesis pathway. The sequence is that of Aspartate carbamoyltransferase catalytic subunit from Psychrobacter arcticus (strain DSM 17307 / VKM B-2377 / 273-4).